The following is a 116-amino-acid chain: Nucleoid-associated protein MLBr02330 (116 aa).

The segment at 96 to 116 is disordered; the sequence is LTSAMRPTAPPPTPPTYMAGT.

The protein belongs to the YbaB/EbfC family. In terms of assembly, homodimer.

It localises to the cytoplasm. Its subcellular location is the nucleoid. Binds to DNA and alters its conformation. May be involved in regulation of gene expression, nucleoid organization and DNA protection. This is Nucleoid-associated protein MLBr02330 from Mycobacterium leprae (strain Br4923).